An 85-amino-acid chain; its full sequence is Thioredoxin (85 aa).

The Glutaredoxin domain maps to 1 to 85 (MSKVKIELFT…ALVEAIKKRL (85 aa)). Cysteines 14 and 17 form a disulfide.

This sequence belongs to the glutaredoxin family.

Its subcellular location is the cytoplasm. Acts to maintain redox homeostasis; functions as a protein disulfide reductase. The polypeptide is Thioredoxin (trx) (Methanocaldococcus jannaschii (strain ATCC 43067 / DSM 2661 / JAL-1 / JCM 10045 / NBRC 100440) (Methanococcus jannaschii)).